The sequence spans 129 residues: Small ribosomal subunit protein uS11 (129 aa).

Belongs to the universal ribosomal protein uS11 family. As to quaternary structure, part of the 30S ribosomal subunit. Interacts with proteins S7 and S18. Binds to IF-3.

Located on the platform of the 30S subunit, it bridges several disparate RNA helices of the 16S rRNA. Forms part of the Shine-Dalgarno cleft in the 70S ribosome. The polypeptide is Small ribosomal subunit protein uS11 (Enterococcus faecalis (strain ATCC 700802 / V583)).